Reading from the N-terminus, the 537-residue chain is Protein ST7 homolog (537 aa).

The chain crosses the membrane as a helical span at residues 15–35; it reads FYVALTGTSSLISGLILIFEW. The segment at 61–111 is disordered; the sequence is SDGQSESSNGSGSSSSSGSSSSSNGGAGGGGSGGAGASGSGSATTSTGTQM. The segment covering 67 to 84 has biased composition (low complexity); that stretch reads SSNGSGSSSSSGSSSSSN. A compositionally biased stretch (gly residues) spans 85 to 99; that stretch reads GGAGGGGSGGAGASG. Over residues 100–109 the composition is skewed to low complexity; the sequence is SGSATTSTGT. Residues 472–492 traverse the membrane as a helical segment; the sequence is LPFFILFTAGLCSITALLALA.

The protein belongs to the ST7 family.

It is found in the membrane. This Drosophila melanogaster (Fruit fly) protein is Protein ST7 homolog.